The chain runs to 313 residues: tRNA dimethylallyltransferase (313 aa).

Residue 17-24 coordinates ATP; that stretch reads GPTASGKT. A substrate-binding site is contributed by 19–24; the sequence is TASGKT. Interaction with substrate tRNA regions lie at residues 42–45, 166–170, and 247–252; these read DSAL, QRLSR, and RCVGYR.

The protein belongs to the IPP transferase family. In terms of assembly, monomer. Mg(2+) serves as cofactor.

The catalysed reaction is adenosine(37) in tRNA + dimethylallyl diphosphate = N(6)-dimethylallyladenosine(37) in tRNA + diphosphate. Catalyzes the transfer of a dimethylallyl group onto the adenine at position 37 in tRNAs that read codons beginning with uridine, leading to the formation of N6-(dimethylallyl)adenosine (i(6)A). This is tRNA dimethylallyltransferase from Yersinia pseudotuberculosis serotype O:1b (strain IP 31758).